The chain runs to 372 residues: Cytochrome b (372 aa).

4 helical membrane-spanning segments follow: residues 25–45 (FGSM…FLAI), 69–90 (WTMQ…YIHI), 105–125 (WLSG…GYVL), and 170–190 (FFAL…IHII). Residues His-75 and His-89 each coordinate heme b. The heme b site is built by His-174 and His-188. His-193 serves as a coordination point for a ubiquinone. 4 helical membrane-spanning segments follow: residues 218–238 (YKDM…LSFS), 280–300 (LGGT…PFTH), 312–332 (LTQI…WTAT), and 339–358 (FIII…IMNP).

This sequence belongs to the cytochrome b family. In terms of assembly, the cytochrome bc1 complex contains 3 respiratory subunits (MT-CYB, CYC1 and UQCRFS1), 2 core proteins (UQCRC1 and UQCRC2) and probably 6 low-molecular weight proteins. Heme b serves as cofactor.

Its subcellular location is the mitochondrion inner membrane. Its function is as follows. Component of the ubiquinol-cytochrome c reductase complex (complex III or cytochrome b-c1 complex) that is part of the mitochondrial respiratory chain. The b-c1 complex mediates electron transfer from ubiquinol to cytochrome c. Contributes to the generation of a proton gradient across the mitochondrial membrane that is then used for ATP synthesis. In Ophiophagus hannah (King cobra), this protein is Cytochrome b (MT-CYB).